The following is a 200-amino-acid chain: Protein GrpE (200 aa).

Basic and acidic residues predominate over residues 1 to 11 (MTDNDGQKDFS). The interval 1 to 43 (MTDNDGQKDFSEAAAENAGSKPGEPRVSKPYIMPDDPEETPSE) is disordered.

The protein belongs to the GrpE family. Homodimer.

It localises to the cytoplasm. In terms of biological role, participates actively in the response to hyperosmotic and heat shock by preventing the aggregation of stress-denatured proteins, in association with DnaK and GrpE. It is the nucleotide exchange factor for DnaK and may function as a thermosensor. Unfolded proteins bind initially to DnaJ; upon interaction with the DnaJ-bound protein, DnaK hydrolyzes its bound ATP, resulting in the formation of a stable complex. GrpE releases ADP from DnaK; ATP binding to DnaK triggers the release of the substrate protein, thus completing the reaction cycle. Several rounds of ATP-dependent interactions between DnaJ, DnaK and GrpE are required for fully efficient folding. This Afipia carboxidovorans (strain ATCC 49405 / DSM 1227 / KCTC 32145 / OM5) (Oligotropha carboxidovorans) protein is Protein GrpE.